Reading from the N-terminus, the 351-residue chain is Heat-inducible transcription repressor HrcA (351 aa).

The protein belongs to the HrcA family.

Functionally, negative regulator of class I heat shock genes (grpE-dnaK-dnaJ and groELS operons). Prevents heat-shock induction of these operons. This Clostridium tetani (strain Massachusetts / E88) protein is Heat-inducible transcription repressor HrcA.